An 89-amino-acid polypeptide reads, in one-letter code: Islet amyloid polypeptide (89 aa).

Positions 1–22 (MCLLKLPVVLIVLLVALHHLKA) are cleaved as a signal peptide. The propeptide occupies 23-31 (TPIESNQVE). A disulfide bridge links C35 with C40. The residue at position 70 (Y70) is a Tyrosine amide. The propeptide occupies 74–89 (STVDILNREPLNYLPF).

The protein belongs to the calcitonin family. Can form homodimers. Interacts with IDE and INS. Interaction with INS inhibits homodimerization and fibril formation.

The protein localises to the secreted. Its function is as follows. Amylin/IAPP is a glucoregulatory peptide hormone that plays an important role in the regulation of energy homeostasis. Selectively inhibits insulin-stimulated glucose utilization and glycogen deposition in muscle, while not affecting adipocyte glucose metabolism. IAPP function is mediated by the CALCR-RAMPs (AMYRs) receptor complexes. Amylin can also bind CALCR receptor in the absence of RAMPs, although it is more selective for AMYRs. In Felis catus (Cat), this protein is Islet amyloid polypeptide (IAPP).